A 725-amino-acid polypeptide reads, in one-letter code: N-alpha-acetyltransferase 35, NatC auxiliary subunit (725 aa).

The segment at 548–573 is disordered; that stretch reads ERIMEEQQKGRSSKKTKKKKKVRPLS. Residues 558-571 are compositionally biased toward basic residues; it reads RSSKKTKKKKKVRP.

It belongs to the MAK10 family. In terms of assembly, component of the N-terminal acetyltransferase C (NatC) complex.

It is found in the cytoplasm. In terms of biological role, auxillary component of the N-terminal acetyltransferase C (NatC) complex which catalyzes acetylation of N-terminal methionine residues. N-terminal acetylation protects proteins from ubiquitination and degradation by the N-end rule pathway. The protein is N-alpha-acetyltransferase 35, NatC auxiliary subunit (NAA35) of Gallus gallus (Chicken).